A 466-amino-acid polypeptide reads, in one-letter code: Teichoic acids export ATP-binding protein TagH (466 aa).

The 223-residue stretch at 27–249 (NKAKSLIGSN…YEKFVQWFKK (223 aa)) folds into the ABC transporter domain. 63 to 70 (GLNGAGKS) is a binding site for ATP. Residues 250–466 (LPKKEQEKFK…TTEQSDGANQ (217 aa)) are unknown. 2 disordered regions span residues 356–403 (NMTS…SNQN) and 439–466 (IHPGQEINLPEPTTSANSTTEQSDGANQ). Over residues 373 to 384 (PKKKVSQAKKTT) the composition is skewed to basic residues. Over residues 385–403 (KVSSTQKNTSSSSSTSNQN) the composition is skewed to low complexity. A LysM domain is found at 403 to 447 (NTYIVQAGDSLSIIAENHGYSVEEIQQVNPGVDFSVIHPGQEINL). Positions 449–466 (EPTTSANSTTEQSDGANQ) are enriched in polar residues.

It belongs to the ABC transporter superfamily. Teichoic acids exporter (TC 3.A.1.104.1) family. As to quaternary structure, the complex is composed of two ATP-binding proteins (TagH) and two transmembrane proteins (TagG).

It is found in the cell membrane. It carries out the reaction ATP + H2O + teichoic acidSide 1 = ADP + phosphate + teichoic acidSide 2.. Part of the ABC transporter complex TagGH involved in teichoic acids export. Responsible for energy coupling to the transport system. The protein is Teichoic acids export ATP-binding protein TagH of Lactococcus lactis subsp. lactis (strain IL1403) (Streptococcus lactis).